Here is a 329-residue protein sequence, read N- to C-terminus: NTD biosynthesis operon regulator NtdR (329 aa).

In terms of domain architecture, HTH lacI-type spans 2-56 (PTIDEIAKLCNVSKTTVSRVLNNHPYVSKEKRDMILKAINELDYTPNYLARNFRR). The segment at residues 4 to 23 (IDEIAKLCNVSKTTVSRVLN) is a DNA-binding region (H-T-H motif).

Functionally, positively regulates the ntdABC operon and negatively regulates its own transcription. Binds to NTD to induce ntdABC transcription. This chain is NTD biosynthesis operon regulator NtdR (ntdR), found in Bacillus subtilis (strain 168).